The chain runs to 246 residues: UPF0309 protein OB3413 (246 aa).

Positions 33 to 212 constitute an SIS domain; it reads MATAVMNGNS…VLKMIEIFEE (180 aa).

The protein belongs to the UPF0309 family.

The chain is UPF0309 protein OB3413 from Oceanobacillus iheyensis (strain DSM 14371 / CIP 107618 / JCM 11309 / KCTC 3954 / HTE831).